Here is a 419-residue protein sequence, read N- to C-terminus: Imidazolonepropionase (419 aa).

2 residues coordinate Fe(3+): H87 and H89. Residues H87 and H89 each contribute to the Zn(2+) site. 4-imidazolone-5-propanoate contacts are provided by R96, Y159, and H192. Residue Y159 coordinates N-formimidoyl-L-glutamate. H257 contributes to the Fe(3+) binding site. H257 serves as a coordination point for Zn(2+). Q260 contacts 4-imidazolone-5-propanoate. D332 lines the Fe(3+) pocket. D332 contributes to the Zn(2+) binding site. N334 and G336 together coordinate N-formimidoyl-L-glutamate. 4-imidazolone-5-propanoate is bound at residue S337.

The protein belongs to the metallo-dependent hydrolases superfamily. HutI family. The cofactor is Zn(2+). It depends on Fe(3+) as a cofactor.

It localises to the cytoplasm. The catalysed reaction is 4-imidazolone-5-propanoate + H2O = N-formimidoyl-L-glutamate. The protein operates within amino-acid degradation; L-histidine degradation into L-glutamate; N-formimidoyl-L-glutamate from L-histidine: step 3/3. Functionally, catalyzes the hydrolytic cleavage of the carbon-nitrogen bond in imidazolone-5-propanoate to yield N-formimidoyl-L-glutamate. It is the third step in the universal histidine degradation pathway. The sequence is that of Imidazolonepropionase from Alteromonas mediterranea (strain DSM 17117 / CIP 110805 / LMG 28347 / Deep ecotype).